The following is a 284-amino-acid chain: Acetylglutamate kinase (284 aa).

Substrate-binding positions include 64–65, R86, and N177; that span reads GG.

The protein belongs to the acetylglutamate kinase family. ArgB subfamily.

The protein localises to the cytoplasm. It carries out the reaction N-acetyl-L-glutamate + ATP = N-acetyl-L-glutamyl 5-phosphate + ADP. The protein operates within amino-acid biosynthesis; L-arginine biosynthesis; N(2)-acetyl-L-ornithine from L-glutamate: step 2/4. Catalyzes the ATP-dependent phosphorylation of N-acetyl-L-glutamate. The polypeptide is Acetylglutamate kinase (Haemophilus ducreyi (strain 35000HP / ATCC 700724)).